A 420-amino-acid polypeptide reads, in one-letter code: UDP-N-acetylglucosamine 1-carboxyvinyltransferase 2 (420 aa).

22-23 is a binding site for phosphoenolpyruvate; sequence KN. R92 is a binding site for UDP-N-acetyl-alpha-D-glucosamine. C116 (proton donor) is an active-site residue. 2-(S-cysteinyl)pyruvic acid O-phosphothioketal is present on C116. UDP-N-acetyl-alpha-D-glucosamine contacts are provided by residues 121 to 125, D307, and I329; that span reads RPIDL.

The protein belongs to the EPSP synthase family. MurA subfamily.

Its subcellular location is the cytoplasm. The enzyme catalyses phosphoenolpyruvate + UDP-N-acetyl-alpha-D-glucosamine = UDP-N-acetyl-3-O-(1-carboxyvinyl)-alpha-D-glucosamine + phosphate. It participates in cell wall biogenesis; peptidoglycan biosynthesis. Its function is as follows. Cell wall formation. Adds enolpyruvyl to UDP-N-acetylglucosamine. In Streptococcus thermophilus (strain ATCC BAA-250 / LMG 18311), this protein is UDP-N-acetylglucosamine 1-carboxyvinyltransferase 2.